The following is a 360-amino-acid chain: Peptide chain release factor 1 (360 aa).

Q235 carries the N5-methylglutamine modification. The disordered stretch occupies residues 286–313 (RQQAEASTRRNLLGSGDRSDRNRTYNFP).

Belongs to the prokaryotic/mitochondrial release factor family. Methylated by PrmC. Methylation increases the termination efficiency of RF1.

It localises to the cytoplasm. In terms of biological role, peptide chain release factor 1 directs the termination of translation in response to the peptide chain termination codons UAG and UAA. In Cronobacter sakazakii (strain ATCC BAA-894) (Enterobacter sakazakii), this protein is Peptide chain release factor 1.